Here is a 20-residue protein sequence, read N- to C-terminus: Alkaline phosphatase (20 aa).

The interval 1 to 20 is disordered; the sequence is TDMLAVSVSSTDAIGHKYGT.

In terms of assembly, homodimer; may be disulfide-linked. In terms of processing, the N-terminus is blocked.

The catalysed reaction is a phosphate monoester + H2O = an alcohol + phosphate. Completely inhibited by thiol-reducing agents, such as DTT and 2-mercaptoethanol. Activity was also inhibited by sodium orthovanadate, sodium molybdate, N-ethylmaleimide, EDTA and zinc ion, but was not inhibited by okadaic acid. Functionally, acts against tyrosine-phosphatases. The chain is Alkaline phosphatase from Prevotella intermedia.